Here is a 185-residue protein sequence, read N- to C-terminus: Ribosome-recycling factor (185 aa).

It belongs to the RRF family.

The protein resides in the cytoplasm. In terms of biological role, responsible for the release of ribosomes from messenger RNA at the termination of protein biosynthesis. May increase the efficiency of translation by recycling ribosomes from one round of translation to another. The polypeptide is Ribosome-recycling factor (Shewanella frigidimarina (strain NCIMB 400)).